The following is an 843-amino-acid chain: Protein P (843 aa).

Residues Met1–Gln177 are terminal protein domain (TP). The spacer stretch occupies residues Glu178–Leu346. 2 disordered regions span residues Gln220–Ser273 and Leu289–Ser316. A compositionally biased stretch (polar residues) spans Leu289 to Gly299. The segment at Glu347–Gln690 is polymerase/reverse transcriptase domain (RT). The region spanning Glu357–Ile600 is the Reverse transcriptase domain. Mg(2+) is bound by residues Asp429, Asp551, and Asp552.

This sequence belongs to the hepadnaviridae P protein family.

It catalyses the reaction DNA(n) + a 2'-deoxyribonucleoside 5'-triphosphate = DNA(n+1) + diphosphate. The catalysed reaction is Endonucleolytic cleavage to 5'-phosphomonoester.. Its activity is regulated as follows. Activated by host HSP70 and HSP40 in vitro to be able to bind the epsilon loop of the pgRNA. Because deletion of the RNase H region renders the protein partly chaperone-independent, the chaperones may be needed indirectly to relieve occlusion of the RNA-binding site by this domain. Inhibited by several reverse-transcriptase inhibitors: Lamivudine, Adefovir and Entecavir. Functionally, multifunctional enzyme that converts the viral RNA genome into dsDNA in viral cytoplasmic capsids. This enzyme displays a DNA polymerase activity that can copy either DNA or RNA templates, and a ribonuclease H (RNase H) activity that cleaves the RNA strand of RNA-DNA heteroduplexes in a partially processive 3'- to 5'-endonucleasic mode. Neo-synthesized pregenomic RNA (pgRNA) are encapsidated together with the P protein, and reverse-transcribed inside the nucleocapsid. Initiation of reverse-transcription occurs first by binding the epsilon loop on the pgRNA genome, and is initiated by protein priming, thereby the 5'-end of (-)DNA is covalently linked to P protein. Partial (+)DNA is synthesized from the (-)DNA template and generates the relaxed circular DNA (RC-DNA) genome. After budding and infection, the RC-DNA migrates in the nucleus, and is converted into a plasmid-like covalently closed circular DNA (cccDNA). The activity of P protein does not seem to be necessary for cccDNA generation, and is presumably released from (+)DNA by host nuclear DNA repair machinery. The sequence is that of Protein P from Hepatitis B virus genotype C subtype ad (isolate Japan/S-179/1988) (HBV-C).